Here is a 169-residue protein sequence, read N- to C-terminus: Unfolded protein response-inducible protein 1 (169 aa).

Functionally, involved in the unfolded protein response (UPR), a transcriptional response which up-regulates genes that enable cells to cope with misfolded, endoplasmic reticulum-retained proteins. UPR is part of the endoplasmic reticulum quality control (ERQC) which prevents the exit of misfolded secretory and membrane proteins from the endoplasmic reticulum. This chain is Unfolded protein response-inducible protein 1 (ULI1), found in Saccharomyces cerevisiae (strain ATCC 204508 / S288c) (Baker's yeast).